The primary structure comprises 115 residues: NAD(P)H-quinone oxidoreductase subunit M (115 aa).

Belongs to the complex I NdhM subunit family. NDH-1 can be composed of about 15 different subunits; different subcomplexes with different compositions have been identified which probably have different functions.

It is found in the cellular thylakoid membrane. It carries out the reaction a plastoquinone + NADH + (n+1) H(+)(in) = a plastoquinol + NAD(+) + n H(+)(out). It catalyses the reaction a plastoquinone + NADPH + (n+1) H(+)(in) = a plastoquinol + NADP(+) + n H(+)(out). Functionally, NDH-1 shuttles electrons from an unknown electron donor, via FMN and iron-sulfur (Fe-S) centers, to quinones in the respiratory and/or the photosynthetic chain. The immediate electron acceptor for the enzyme in this species is believed to be plastoquinone. Couples the redox reaction to proton translocation, and thus conserves the redox energy in a proton gradient. Cyanobacterial NDH-1 also plays a role in inorganic carbon-concentration. The sequence is that of NAD(P)H-quinone oxidoreductase subunit M from Prochlorococcus marinus (strain AS9601).